Here is a 529-residue protein sequence, read N- to C-terminus: DnaJ homolog l(2)tid, mitochondrial (529 aa).

A mitochondrion-targeting transit peptide spans 1-22 (MISCKNLCVLRQLPLKNCRRHY). Arg-35 is subject to Omega-N-methylarginine. Residues 80-145 (DYYATLGVAK…QKRREYDTYG (66 aa)) form the J domain. Lys-121 is subject to N6-acetyllysine. The CR-type zinc-finger motif lies at 230–308 (GVNKDVNVNV…CEGKGQTVQR (79 aa)). Zn(2+)-binding residues include Cys-243, Cys-246, Cys-260, Cys-263, Cys-282, Cys-285, Cys-296, and Cys-299. Residues 243-250 (CPKCAGSK) form a CXXCXGXG motif; approximate repeat. The CXXCXGXG motif repeat unit spans residues 260 to 267 (CQYCNGTG). A CXXCXGXG motif; approximate repeat occupies 282-289 (CRYCQGTR). A CXXCXGXG motif repeat occupies 296–303 (CAECEGKG). The segment at 441-529 (TPGQIHGMAQ…FLNKIKSMFN (89 aa)) is disordered. Residues 497-508 (QSEKSETRRKDQ) are compositionally biased toward basic and acidic residues.

The protein resides in the mitochondrion outer membrane. May act as a tumor suppressor in larval imaginal disks. This Drosophila virilis (Fruit fly) protein is DnaJ homolog l(2)tid, mitochondrial (l(2)tid).